A 228-amino-acid chain; its full sequence is UPF0173 metal-dependent hydrolase LMHCC_0991 (228 aa).

This sequence belongs to the UPF0173 family.

In Listeria monocytogenes serotype 4a (strain HCC23), this protein is UPF0173 metal-dependent hydrolase LMHCC_0991.